A 298-amino-acid chain; its full sequence is 4-hydroxy-tetrahydrodipicolinate synthase (298 aa).

Thr-51 lines the pyruvate pocket. Tyr-139 serves as the catalytic Proton donor/acceptor. Lys-167 (schiff-base intermediate with substrate) is an active-site residue. A pyruvate-binding site is contributed by Ile-209.

Belongs to the DapA family. As to quaternary structure, homotetramer; dimer of dimers.

It localises to the cytoplasm. The catalysed reaction is L-aspartate 4-semialdehyde + pyruvate = (2S,4S)-4-hydroxy-2,3,4,5-tetrahydrodipicolinate + H2O + H(+). Its pathway is amino-acid biosynthesis; L-lysine biosynthesis via DAP pathway; (S)-tetrahydrodipicolinate from L-aspartate: step 3/4. Catalyzes the condensation of (S)-aspartate-beta-semialdehyde [(S)-ASA] and pyruvate to 4-hydroxy-tetrahydrodipicolinate (HTPA). This chain is 4-hydroxy-tetrahydrodipicolinate synthase, found in Haemophilus influenzae (strain ATCC 51907 / DSM 11121 / KW20 / Rd).